The following is a 208-amino-acid chain: MEKHMKVVAFERQQQGTGASRRLRNAGKTTGIVYGGEAAPQMIELDHNALWHALKKEAFHSSILDLEVAGKSQRVLLRDVQYHPFRQLVLHVDFQRIDPKKKLHTKAPLHFLNAETSPAVKLSSAVVSHVVTEIEIECLPADLPEFLEVDLSKIEAGQSLHAKDIALPNGVALTAHVDAENPVIASATIPAGAVSDEAAAGEGETPAA.

This sequence belongs to the bacterial ribosomal protein bL25 family. CTC subfamily. Part of the 50S ribosomal subunit; part of the 5S rRNA/L5/L18/L25 subcomplex. Contacts the 5S rRNA. Binds to the 5S rRNA independently of L5 and L18.

Its function is as follows. This is one of the proteins that binds to the 5S RNA in the ribosome where it forms part of the central protuberance. This is Large ribosomal subunit protein bL25 from Burkholderia pseudomallei (strain K96243).